A 142-amino-acid chain; its full sequence is Large ribosomal subunit protein uL13 (142 aa).

This sequence belongs to the universal ribosomal protein uL13 family. In terms of assembly, part of the 50S ribosomal subunit.

Functionally, this protein is one of the early assembly proteins of the 50S ribosomal subunit, although it is not seen to bind rRNA by itself. It is important during the early stages of 50S assembly. The polypeptide is Large ribosomal subunit protein uL13 (Pseudomonas fluorescens (strain Pf0-1)).